Here is a 695-residue protein sequence, read N- to C-terminus: MAASSACLVGNGLSVNTTTKQRLSKHFSGRQTSFSSVIRTSKVNVVKASLDGKKKQEGRRDFLKILLGNAGVGLVASGKANADEQGVSSSRMSYSRFLEYLDKDRVNKVDLYENGTIAIVEAVSPELGNRVERVRVQLPGLSQELLQKLRAKNIDFAAHNAQEDQGSVLFNLIGNLAFPALLIGGLFLLSRRSGGGMGGPGGPGNPLQFGQSKAKFQMEPNTGVTFDDVAGVDEAKQDFMEVVEFLKKPERFTAVGAKIPKGVLLIGPPGTGKTLLAKAIAGEAGVPFFSISGSEFVEMFVGVGASRVRDLFKKAKENAPCIVFVDEIDAVGRQRGTGIGGGNDEREQTLNQLLTEMDGFEGNTGVIVVAATNRADILDSALLRPGRFDRQVSVDVPDVKGRTDILKVHAGNKKFDNDVSLEIIAMRTPGFSGADLANLLNEAAILAGRRARTSISSKEIDDSIDRIVAGMEGTVMTDGKSKSLVAYHEVGHAVCGTLTPGHDAVQKVTLIPRGQARGLTWFIPSDDPTLISKQQLFARIVGGLGGRAAEEIIFGDSEVTTGAVGDLQQITGLARQMVTTFGMSDIGPWSLMDSSAQSDVIMRMMARNSMSEKLAEDIDSAVKKLSDSAYEIALSHIKNNREAMDKLVEVLLEKETIGGDEFRAILSEFTEIPPENRVPSSTTTTPASAPTPAAV.

The N-terminal 47 residues, 1–47 (MAASSACLVGNGLSVNTTTKQRLSKHFSGRQTSFSSVIRTSKVNVVK), are a transit peptide targeting the chloroplast. The transit peptide at 48 to 82 (ASLDGKKKQEGRRDFLKILLGNAGVGLVASGKANA) directs the protein to the thylakoid. Residues 83-167 (DEQGVSSSRM…AHNAQEDQGS (85 aa)) lie on the Lumenal, thylakoid side of the membrane. Residues 168–188 (VLFNLIGNLAFPALLIGGLFL) form a helical membrane-spanning segment. Topologically, residues 189–695 (LSRRSGGGMG…PASAPTPAAV (507 aa)) are stromal. Residue 267 to 274 (GPPGTGKT) participates in ATP binding. Histidine 488 contributes to the Zn(2+) binding site. The active site involves glutamate 489. Zn(2+)-binding residues include histidine 492 and aspartate 566. The interval 673–695 (PPENRVPSSTTTTPASAPTPAAV) is disordered. The segment covering 679-695 (PSSTTTTPASAPTPAAV) has biased composition (low complexity).

This sequence in the N-terminal section; belongs to the AAA ATPase family. It in the C-terminal section; belongs to the peptidase M41 family. Interacts with CHIP and FTSH5. Heterohexamers with FTSH1, FTSH5 and FTSH8. May also form homooligomers. The cofactor is Zn(2+). The FTSH2 precursor is ubiquitinated by CHIP in the cytoplasm. Expressed in cotyledons, cauline and rosette leaves, stems, sepals, flovers and siliques. Very low in roots.

The protein localises to the plastid. The protein resides in the chloroplast thylakoid membrane. In terms of biological role, part of a complex that function as an ATP-dependent zinc metallopeptidase. Involved in the thylakoid formation and in the removal of damaged D1 in the photosystem II, preventing cell death under high-intensity light conditions, but not involved in thermotolerance. The polypeptide is ATP-dependent zinc metalloprotease FTSH 2, chloroplastic (FTSH2) (Arabidopsis thaliana (Mouse-ear cress)).